Reading from the N-terminus, the 114-residue chain is uncharacterized protein (114 aa).

The next 3 helical transmembrane spans lie at 38–60 (PLWFLTVTGILEIAGALAMTAGI), 64–86 (YAAIGAGVLFVVLMAGAIHAHMF), and 91–113 (SVIMAIQAMICLIVSIMIIMGSY).

It localises to the cell membrane. This is an uncharacterized protein from Bacillus subtilis (strain 168).